The chain runs to 293 residues: NAD kinase (293 aa).

Asp-68 serves as the catalytic Proton acceptor. Residues Asp-68–Gly-69, Asn-142–Asp-143, Arg-153, Asp-172, and Thr-183–Ser-188 each bind NAD(+).

The protein belongs to the NAD kinase family. A divalent metal cation is required as a cofactor.

The protein localises to the cytoplasm. The enzyme catalyses NAD(+) + ATP = ADP + NADP(+) + H(+). Its function is as follows. Involved in the regulation of the intracellular balance of NAD and NADP, and is a key enzyme in the biosynthesis of NADP. Catalyzes specifically the phosphorylation on 2'-hydroxyl of the adenosine moiety of NAD to yield NADP. The sequence is that of NAD kinase from Lachnospira eligens (strain ATCC 27750 / DSM 3376 / VPI C15-48 / C15-B4) (Eubacterium eligens).